The following is a 1556-amino-acid chain: uncharacterized protein (1556 aa).

Ser2 bears the N-acetylserine mark. A compositionally biased stretch (basic and acidic residues) spans Asn145 to Lys156. A disordered region spans residues Asn145 to Asp170. Residues Ser378–Pro583 form the Helicase ATP-binding domain. Glu391–Thr398 contacts ATP. Residue Ser810 is modified to Phosphoserine. The interval Ser810 to Met850 is disordered. Composition is skewed to basic and acidic residues over residues Met817–Ser827 and Arg834–Asn846. The RING-type zinc-finger motif lies at Cys1239–Lys1277. The span at Arg1297–Ala1309 shows a compositional bias: basic and acidic residues. Disordered regions lie at residues Arg1297 to Asn1319 and Glu1508 to Glu1534. A compositionally biased stretch (low complexity) spans Asp1310 to Asn1319. The region spanning Lys1363 to Ala1531 is the Helicase C-terminal domain. The span at Glu1508 to Glu1518 shows a compositional bias: basic and acidic residues. The span at Ala1519–Asp1529 shows a compositional bias: acidic residues.

The protein belongs to the SNF2/RAD54 helicase family.

It localises to the nucleus. Is probably involved in a pathway contributing to genomic integrity. This is an uncharacterized protein from Saccharomyces cerevisiae (strain ATCC 204508 / S288c) (Baker's yeast).